An 822-amino-acid polypeptide reads, in one-letter code: uncharacterized protein (822 aa).

The segment at 1–230 is disordered; the sequence is MARGKRSTQR…NAAPLNKTDA (230 aa). S27 bears the Phosphoserine mark. Basic residues predominate over residues 34 to 44; that stretch reads SKAKKNKKKLN. Residues S47, S51, and S55 each carry the phosphoserine modification. Y57 is modified (phosphotyrosine). Over residues 61–70 the composition is skewed to acidic residues; sequence PEDDEVDEEV. A compositionally biased stretch (basic residues) spans 73–85; sequence VKKKPSKKSKKAK. Acidic residues predominate over residues 92–106; the sequence is FADEQSVEEEEEEDS. Residue S97 is modified to Phosphoserine. Residues 111-121 are compositionally biased toward basic residues; that stretch reads RKNKKSSKKAS. Composition is skewed to acidic residues over residues 129-144 and 163-172; these read LADD…EESE and SEALDDGDIE. S137 and S163 each carry phosphoserine. ABC transporter domains follow at residues 276–519 and 594–809; these read LQVE…VQLA and IKFQ…AKER. ATP contacts are provided by residues 308–315 and 627–634; these read APNGSGKS and GPNGAGKT.

It belongs to the ABC transporter superfamily.

The protein localises to the cytoplasm. This is an uncharacterized protein from Schizosaccharomyces pombe (strain 972 / ATCC 24843) (Fission yeast).